Here is a 283-residue protein sequence, read N- to C-terminus: Interferon alpha-inducible protein 27-like protein 2B (283 aa).

A mitochondrion-targeting transit peptide spans 1-90; that stretch reads MKRKFVGAAI…AVGTATGARA (90 aa). Residues 90-120 are disordered; it reads AEGSMGASREQESGPQDPPQELQEPQEPPSC. 3 helical membrane-spanning segments follow: residues 130–150, 176–196, and 202–222; these read FVGAAIGGALAVAGAPIALSA, GGGIAAGGLVATLQSVGILGL, and IILGAVGAATGATAAGAMGAC. Positions 227–283 are disordered; it reads PGLQDLQQEPKEPQEPQELQKQQEPQEPQELQKQQETQETQETQELQKTQEPPSYEK. Positions 242 to 283 are enriched in low complexity; sequence PQELQKQQEPQEPQELQKQQETQETQETQELQKTQEPPSYEK.

Belongs to the IFI6/IFI27 family. Homooligomer. Interacts with BAK1. Interacts with BAX. Interacts with adenine nucleotide translocase.

It localises to the mitochondrion inner membrane. Its function is as follows. Functions in the intrinsic apoptotic signaling pathway and may have an interferon-induced antiviral activity. The chain is Interferon alpha-inducible protein 27-like protein 2B from Mus musculus (Mouse).